The chain runs to 216 residues: LexA repressor (216 aa).

Residues 28 to 48 (RAEIAAEFGFSSPNAAEEHLR) constitute a DNA-binding region (H-T-H motif). Catalysis depends on for autocatalytic cleavage activity residues Ser-134 and Lys-171.

This sequence belongs to the peptidase S24 family. Homodimer.

It catalyses the reaction Hydrolysis of Ala-|-Gly bond in repressor LexA.. Represses a number of genes involved in the response to DNA damage (SOS response), including recA and lexA. In the presence of single-stranded DNA, RecA interacts with LexA causing an autocatalytic cleavage which disrupts the DNA-binding part of LexA, leading to derepression of the SOS regulon and eventually DNA repair. The polypeptide is LexA repressor (Ralstonia pickettii (strain 12J)).